The sequence spans 848 residues: Adenylate cyclase (848 aa).

The catalytic stretch occupies residues 1-535; it reads MYLYIETLKQ…DVSHHFPLRL (535 aa). The regulatory stretch occupies residues 541–848; sequence KALYSPCEIR…DTPLLQQYFS (308 aa). The residue at position 609 (His609) is a Phosphohistidine; by CRR.

The protein belongs to the adenylyl cyclase class-1 family.

Its subcellular location is the cytoplasm. The enzyme catalyses ATP = 3',5'-cyclic AMP + diphosphate. The chain is Adenylate cyclase (cyaA) from Shigella flexneri.